A 156-amino-acid polypeptide reads, in one-letter code: 6,7-dimethyl-8-ribityllumazine synthase (156 aa).

Residues phenylalanine 22, 57 to 59 (AVE), and 81 to 83 (CVI) each bind 5-amino-6-(D-ribitylamino)uracil. 86–87 (GT) lines the (2S)-2-hydroxy-3-oxobutyl phosphate pocket. The active-site Proton donor is the histidine 89. Position 114 (phenylalanine 114) interacts with 5-amino-6-(D-ribitylamino)uracil. Arginine 128 contacts (2S)-2-hydroxy-3-oxobutyl phosphate.

The protein belongs to the DMRL synthase family. In terms of assembly, forms an icosahedral capsid composed of 60 subunits, arranged as a dodecamer of pentamers.

It carries out the reaction (2S)-2-hydroxy-3-oxobutyl phosphate + 5-amino-6-(D-ribitylamino)uracil = 6,7-dimethyl-8-(1-D-ribityl)lumazine + phosphate + 2 H2O + H(+). It functions in the pathway cofactor biosynthesis; riboflavin biosynthesis; riboflavin from 2-hydroxy-3-oxobutyl phosphate and 5-amino-6-(D-ribitylamino)uracil: step 1/2. In terms of biological role, catalyzes the formation of 6,7-dimethyl-8-ribityllumazine by condensation of 5-amino-6-(D-ribitylamino)uracil with 3,4-dihydroxy-2-butanone 4-phosphate. This is the penultimate step in the biosynthesis of riboflavin. The chain is 6,7-dimethyl-8-ribityllumazine synthase from Tolumonas auensis (strain DSM 9187 / NBRC 110442 / TA 4).